The chain runs to 182 residues: ATP synthase subunit delta (182 aa).

Belongs to the ATPase delta chain family. In terms of assembly, F-type ATPases have 2 components, F(1) - the catalytic core - and F(0) - the membrane proton channel. F(1) has five subunits: alpha(3), beta(3), gamma(1), delta(1), epsilon(1). F(0) has three main subunits: a(1), b(2) and c(10-14). The alpha and beta chains form an alternating ring which encloses part of the gamma chain. F(1) is attached to F(0) by a central stalk formed by the gamma and epsilon chains, while a peripheral stalk is formed by the delta and b chains.

It is found in the cell inner membrane. F(1)F(0) ATP synthase produces ATP from ADP in the presence of a proton or sodium gradient. F-type ATPases consist of two structural domains, F(1) containing the extramembraneous catalytic core and F(0) containing the membrane proton channel, linked together by a central stalk and a peripheral stalk. During catalysis, ATP synthesis in the catalytic domain of F(1) is coupled via a rotary mechanism of the central stalk subunits to proton translocation. Functionally, this protein is part of the stalk that links CF(0) to CF(1). It either transmits conformational changes from CF(0) to CF(1) or is implicated in proton conduction. In Cytophaga hutchinsonii (strain ATCC 33406 / DSM 1761 / CIP 103989 / NBRC 15051 / NCIMB 9469 / D465), this protein is ATP synthase subunit delta.